The following is a 612-amino-acid chain: Chaperone protein DnaK (612 aa).

Residue threonine 173 is modified to Phosphothreonine; by autocatalysis. The tract at residues 576 to 612 is disordered; the sequence is AAKQAQAQQDGGAGAKKADDNVVDAEYEEVNDDKDQK. A compositionally biased stretch (acidic residues) spans 596 to 612; sequence NVVDAEYEEVNDDKDQK.

This sequence belongs to the heat shock protein 70 family.

Functionally, acts as a chaperone. The chain is Chaperone protein DnaK from Bacillus licheniformis (strain ATCC 14580 / DSM 13 / JCM 2505 / CCUG 7422 / NBRC 12200 / NCIMB 9375 / NCTC 10341 / NRRL NRS-1264 / Gibson 46).